A 249-amino-acid polypeptide reads, in one-letter code: Exosome complex component Rrp41 (249 aa).

Belongs to the RNase PH family. Rrp41 subfamily. Component of the archaeal exosome complex. Forms a hexameric ring-like arrangement composed of 3 Rrp41-Rrp42 heterodimers. The hexameric ring associates with a trimer of Rrp4 and/or Csl4 subunits.

It localises to the cytoplasm. In terms of biological role, catalytic component of the exosome, which is a complex involved in RNA degradation. Has 3'-&gt;5' exoribonuclease activity. Can also synthesize heteromeric RNA-tails. This chain is Exosome complex component Rrp41, found in Thermococcus kodakarensis (strain ATCC BAA-918 / JCM 12380 / KOD1) (Pyrococcus kodakaraensis (strain KOD1)).